The sequence spans 282 residues: Pantothenate synthetase (282 aa).

30–37 (MGYLHEGH) contacts ATP. H37 acts as the Proton donor in catalysis. Position 61 (Q61) interacts with (R)-pantoate. Q61 serves as a coordination point for beta-alanine. An ATP-binding site is contributed by 147-150 (GMKD). Q153 contacts (R)-pantoate. ATP is bound by residues V176 and 184–187 (KSSR).

It belongs to the pantothenate synthetase family. As to quaternary structure, homodimer.

The protein resides in the cytoplasm. It catalyses the reaction (R)-pantoate + beta-alanine + ATP = (R)-pantothenate + AMP + diphosphate + H(+). It participates in cofactor biosynthesis; (R)-pantothenate biosynthesis; (R)-pantothenate from (R)-pantoate and beta-alanine: step 1/1. Catalyzes the condensation of pantoate with beta-alanine in an ATP-dependent reaction via a pantoyl-adenylate intermediate. The chain is Pantothenate synthetase from Bacillus mycoides (strain KBAB4) (Bacillus weihenstephanensis).